Reading from the N-terminus, the 151-residue chain is Methylglyoxal synthase (151 aa).

The region spanning 6-151 is the MGS-like domain; it reads RVMPAHKHIA…DYDAYLAERV (146 aa). Residues histidine 19, lysine 23, 45–48, and 65–66 contribute to the substrate site; these read TGTT and SG. Aspartate 71 serves as the catalytic Proton donor/acceptor. Histidine 98 is a binding site for substrate.

Belongs to the methylglyoxal synthase family.

It carries out the reaction dihydroxyacetone phosphate = methylglyoxal + phosphate. In terms of biological role, catalyzes the formation of methylglyoxal from dihydroxyacetone phosphate. This Aliivibrio fischeri (strain MJ11) (Vibrio fischeri) protein is Methylglyoxal synthase.